Consider the following 632-residue polypeptide: Nucleoside triphosphatase I (632 aa).

One can recognise a Helicase ATP-binding domain in the interval 42 to 204; it reads FLGLDKMHSL…IMLVNLLRPK (163 aa). Residue 55 to 62 coordinates ATP; that stretch reads HETGVGKT. The DEXH box signature appears at 141 to 144; it reads DECH. The Helicase C-terminal domain occupies 367–532; that stretch reads KFTDVCLRIL…EFTQLFKVFK (166 aa). Residues 457–524 form a binding to the cap-specific mRNA (nucleoside-2'-O-)-methyltransferase region; the sequence is DIFILDMTWN…DIIRNKSKEF (68 aa).

The protein belongs to the helicase family. NPH I subfamily. In terms of assembly, monomer. Interacts (via C-terminus) with RAP94 (via N-terminus). Interacts with the cap-specific mRNA (nucleoside-2'-O-)-methyltransferase.

It is found in the virion. The enzyme catalyses a ribonucleoside 5'-triphosphate + H2O = a ribonucleoside 5'-diphosphate + phosphate + H(+). In terms of biological role, DNA-dependent ATPase required for providing the needed energy to achieve the termination of early transcripts. Acts in concert with the RAP94 subunit of the virion RNA polymerase and the capping enzyme/VTF to catalyze release of UUUUUNU-containing nascent RNA from the elongation complex. NPH-I must bind ssDNA in order to exhibit ATPase activity. The polypeptide is Nucleoside triphosphatase I (NPH1) (Rabbit fibroma virus (strain Kasza) (RFV)).